The chain runs to 130 residues: Small ribosomal subunit protein uS9 (130 aa).

It belongs to the universal ribosomal protein uS9 family.

In Desulfosudis oleivorans (strain DSM 6200 / JCM 39069 / Hxd3) (Desulfococcus oleovorans), this protein is Small ribosomal subunit protein uS9.